The following is a 106-amino-acid chain: ATP-dependent Clp protease adapter protein ClpS (106 aa).

This sequence belongs to the ClpS family. As to quaternary structure, binds to the N-terminal domain of the chaperone ClpA.

Its function is as follows. Involved in the modulation of the specificity of the ClpAP-mediated ATP-dependent protein degradation. This Enterobacter sp. (strain 638) protein is ATP-dependent Clp protease adapter protein ClpS.